A 612-amino-acid chain; its full sequence is Serine/threonine-protein kinase Nek1 (612 aa).

The region spanning Y4–L258 is the Protein kinase domain. Residues I10–A18 and K33 each bind ATP. D129 (proton acceptor) is an active-site residue. Positions I503–N513 are enriched in polar residues. Residues I503 to P534 form a disordered region. Residues A514–S527 are compositionally biased toward low complexity.

This sequence belongs to the protein kinase superfamily. NEK Ser/Thr protein kinase family. NIMA subfamily.

The catalysed reaction is L-seryl-[protein] + ATP = O-phospho-L-seryl-[protein] + ADP + H(+). It carries out the reaction L-threonyl-[protein] + ATP = O-phospho-L-threonyl-[protein] + ADP + H(+). Functionally, may be involved in plant development processes. The protein is Serine/threonine-protein kinase Nek1 (NEK1) of Arabidopsis thaliana (Mouse-ear cress).